The primary structure comprises 134 residues: 16 kDa beta-galactoside-binding lectin (134 aa).

At Met1 the chain carries N-acetylmethionine. The 131-residue stretch at 4–134 (GLVVTQLDVQ…DFKVKAIKFS (131 aa)) folds into the Galectin domain. 69–75 (WGEEDRK) is a binding site for a beta-D-galactoside.

In terms of assembly, homodimer. Mainly in the liver (adult), mainly in the muscle (embryo).

This protein binds beta-galactoside. Its physiological function is not yet known. It may be involved in the regulation of differentiation. This Gallus gallus (Chicken) protein is 16 kDa beta-galactoside-binding lectin.